A 180-amino-acid chain; its full sequence is ATP synthase subunit delta (180 aa).

It belongs to the ATPase delta chain family. F-type ATPases have 2 components, F(1) - the catalytic core - and F(0) - the membrane proton channel. F(1) has five subunits: alpha(3), beta(3), gamma(1), delta(1), epsilon(1). F(0) has three main subunits: a(1), b(2) and c(10-14). The alpha and beta chains form an alternating ring which encloses part of the gamma chain. F(1) is attached to F(0) by a central stalk formed by the gamma and epsilon chains, while a peripheral stalk is formed by the delta and b chains.

The protein resides in the cell membrane. In terms of biological role, f(1)F(0) ATP synthase produces ATP from ADP in the presence of a proton or sodium gradient. F-type ATPases consist of two structural domains, F(1) containing the extramembraneous catalytic core and F(0) containing the membrane proton channel, linked together by a central stalk and a peripheral stalk. During catalysis, ATP synthesis in the catalytic domain of F(1) is coupled via a rotary mechanism of the central stalk subunits to proton translocation. Functionally, this protein is part of the stalk that links CF(0) to CF(1). It either transmits conformational changes from CF(0) to CF(1) or is implicated in proton conduction. The sequence is that of ATP synthase subunit delta from Caldicellulosiruptor bescii (strain ATCC BAA-1888 / DSM 6725 / KCTC 15123 / Z-1320) (Anaerocellum thermophilum).